The primary structure comprises 105 residues: Large ribosomal subunit protein uL24 (105 aa).

It belongs to the universal ribosomal protein uL24 family. As to quaternary structure, part of the 50S ribosomal subunit.

One of two assembly initiator proteins, it binds directly to the 5'-end of the 23S rRNA, where it nucleates assembly of the 50S subunit. In terms of biological role, one of the proteins that surrounds the polypeptide exit tunnel on the outside of the subunit. The protein is Large ribosomal subunit protein uL24 of Nitrosococcus oceani (strain ATCC 19707 / BCRC 17464 / JCM 30415 / NCIMB 11848 / C-107).